Reading from the N-terminus, the 838-residue chain is V-type proton ATPase 116 kDa subunit a 1 (838 aa).

Residues 1-388 (MGELFRSEEM…DAYGIGTYRE (388 aa)) are Cytoplasmic-facing. 2 positions are modified to phosphothreonine: Thr250 and Thr360. Position 364 is a phosphotyrosine (Tyr364). The chain crosses the membrane as a helical span at residues 389-407 (INPAPYTIITFPFLFAVMF). Residues 408 to 409 (GD) lie on the Vacuolar side of the membrane. A helical membrane pass occupies residues 410–426 (LGHGILMTLFAVWMVLK). Residues 427-441 (ESRILSQKNENEMFS) are Cytoplasmic-facing. Residues 442 to 471 (TIFSGRYIILLMGVFSIYTGLIYNDCFSKS) form a helical membrane-spanning segment. The Vacuolar segment spans residues 472 to 535 (LNIFGSSWSV…ATNKLTFLNS (64 aa)). Residues 536-555 (FKMKMSVILGIIHMLFGVSL) traverse the membrane as a helical segment. Topologically, residues 556-573 (SLFNHTYFKKPLNIYFGF) are cytoplasmic. Residues 574-594 (IPEIIFMTSLFGYLVILIFYK) traverse the membrane as a helical segment. At 595–639 (WTAYNAKTSEKAPSLLIHFINMFLFSYGDSGNSMLYSGQKGIQCF) the chain is on the vacuolar side. Residues 640–659 (LVVVALLCVPWMLLFKPLVL) traverse the membrane as a helical segment. Residues 660-725 (RRQYLRRKHL…DTMVHQAIHT (66 aa)) are Cytoplasmic-facing. The chain crosses the membrane as a helical span at residues 726–750 (IEYCLGCISNTASYLRLWALSLAHA). The Vacuolar portion of the chain corresponds to 751-771 (QLSEVLWTMVIHIGLKVKSLA). A helical transmembrane segment spans residues 772–810 (GGLALFFIFAAFATLTVAILLIMEGLSAFLHALRLHWVE). Topologically, residues 811–838 (FQNKFYSGTGFKFLPFSFEHIREGKFDD) are cytoplasmic.

This sequence belongs to the V-ATPase 116 kDa subunit family. In terms of assembly, V-ATPase is a heteromultimeric enzyme made up of two complexes: the ATP-hydrolytic V1 complex and the proton translocation V0 complex. The V1 complex consists of three catalytic AB heterodimers that form a heterohexamer, three peripheral stalks each consisting of EG heterodimers, one central rotor including subunits D and F, and the regulatory subunits C and H. The proton translocation complex V0 consists of the proton transport subunit a, a ring of proteolipid subunits c9c'', rotary subunit d, subunits e and f, and the accessory subunits ATP6AP1/Ac45 and ATP6AP2/PRR. Interacts with SPAAR. As to expression, expressed in brain (at protein level). In terms of tissue distribution, expressed heart, kidney, liver, spleen, and to a lesser extent in brain.

Its subcellular location is the cytoplasmic vesicle. The protein localises to the clathrin-coated vesicle membrane. The protein resides in the secretory vesicle. It is found in the synaptic vesicle membrane. It localises to the melanosome. Functionally, subunit of the V0 complex of vacuolar(H+)-ATPase (V-ATPase), a multisubunit enzyme composed of a peripheral complex (V1) that hydrolyzes ATP and a membrane integral complex (V0) that translocates protons. V-ATPase is responsible for the acidification of various organelles, such as lysosomes, endosomes, the trans-Golgi network, and secretory granules, including synaptic vesicles. In certain cell types, can be exported to the plasma membrane, where it is involved in the acidification of the extracellular environment. Required for assembly and activity of the vacuolar ATPase. Through its action on compartment acidification, plays an essential role in neuronal development in terms of integrity and connectivity of neurons. This Bos taurus (Bovine) protein is V-type proton ATPase 116 kDa subunit a 1 (ATP6V0A1).